The primary structure comprises 294 residues: Protoheme IX farnesyltransferase (294 aa).

The next 9 membrane-spanning stretches (helical) occupy residues 13 to 33 (IIFG…KGVI), 35 to 55 (YPLF…GCVF), 84 to 104 (ISLI…YAAA), 107 to 127 (LAMQ…SLYM), 132 to 152 (VYGT…GYCA), 162 to 182 (LILL…IAIF), 208 to 228 (IILY…SGYA), 229 to 249 (GYKY…MALS), and 264 to 284 (FIFS…DPHV).

Belongs to the UbiA prenyltransferase family. Protoheme IX farnesyltransferase subfamily.

It is found in the cell inner membrane. It catalyses the reaction heme b + (2E,6E)-farnesyl diphosphate + H2O = Fe(II)-heme o + diphosphate. It functions in the pathway porphyrin-containing compound metabolism; heme O biosynthesis; heme O from protoheme: step 1/1. Its function is as follows. Converts heme B (protoheme IX) to heme O by substitution of the vinyl group on carbon 2 of heme B porphyrin ring with a hydroxyethyl farnesyl side group. The polypeptide is Protoheme IX farnesyltransferase (Photorhabdus laumondii subsp. laumondii (strain DSM 15139 / CIP 105565 / TT01) (Photorhabdus luminescens subsp. laumondii)).